The following is a 564-amino-acid chain: Ell-associated factor Eaf (564 aa).

Disordered stretches follow at residues 179–255 (SGPG…MITD) and 270–564 (QANI…DDDD). The span at 186–205 (ENSTMRVSSKTKVSTGSRRN) shows a compositional bias: polar residues. Phosphoserine is present on Ser215. The span at 274 to 283 (SGSSTGSSSG) shows a compositional bias: low complexity. Positions 297 to 309 (GKQRQAHGKRQQI) are enriched in basic residues. Low complexity-rich tracts occupy residues 315 to 329 (PPVQQQPHYQQQQQP), 343 to 387 (QQQQ…QQRP), and 409 to 420 (ASQSVAQAAAVL). Residues 438–453 (DSSDSDSGSDSDDSTE) show a composition bias toward acidic residues. 3 stretches are compositionally biased toward low complexity: residues 463–505 (EQQQ…NQLP), 523–533 (QQPQPQPQQQQ), and 546–564 (NDLLQNDLQLSSNSSDDDD).

This sequence belongs to the EAF family.

The protein resides in the nucleus. Functionally, promotes transcriptional elongation by Su(Tpl)/ELL. Essential for development. In Drosophila pseudoobscura pseudoobscura (Fruit fly), this protein is Ell-associated factor Eaf.